Here is a 192-residue protein sequence, read N- to C-terminus: Signal peptidase complex catalytic subunit SEC11C (192 aa).

Residues 1 to 28 (MVRAGAVGAHLPASGLDIFGDLKKMNKR) are Cytoplasmic-facing. The chain crosses the membrane as a helical; Signal-anchor for type II membrane protein span at residues 29 to 48 (QLYYQVLNFAMIVSSALMIW). The Lumenal portion of the chain corresponds to 49 to 192 (KGLIVLTGSE…GAYVLLKRES (144 aa)). Active-site charge relay system residues include Ser68, His108, and Asp134. The C-terminal short (CTS) helix stretch occupies residues 177–188 (ALLAVMGAYVLL).

Belongs to the peptidase S26B family. In terms of assembly, component of the signal peptidase complex paralog C (SPC-C) composed of a catalytic subunit SEC11C and three accessory subunits SPCS1, SPCS2 and SPCS3. Within the complex, interacts with SPCS2 and SPCS3. The complex induces a local thinning of the ER membrane which is used to measure the length of the signal peptide (SP) h-region of protein substrates. This ensures the selectivity of the complex towards h-regions shorter than 18-20 amino acids. May undergo processing at the N-terminus.

Its subcellular location is the endoplasmic reticulum membrane. It catalyses the reaction Cleavage of hydrophobic, N-terminal signal or leader sequences from secreted and periplasmic proteins.. In terms of biological role, catalytic component of the signal peptidase complex (SPC) which catalyzes the cleavage of N-terminal signal sequences from nascent proteins as they are translocated into the lumen of the endoplasmic reticulum. Specifically cleaves N-terminal signal peptides that contain a hydrophobic alpha-helix (h-region) shorter than 18-20 amino acids. The polypeptide is Signal peptidase complex catalytic subunit SEC11C (SEC11C) (Homo sapiens (Human)).